The primary structure comprises 503 residues: Aromatase 1 (503 aa).

Cys437 is a heme binding site.

Belongs to the cytochrome P450 family. The cofactor is heme.

Its subcellular location is the membrane. It carries out the reaction testosterone + 3 reduced [NADPH--hemoprotein reductase] + 3 O2 = 17beta-estradiol + formate + 3 oxidized [NADPH--hemoprotein reductase] + 4 H2O + 4 H(+). The enzyme catalyses androst-4-ene-3,17-dione + 3 reduced [NADPH--hemoprotein reductase] + 3 O2 = estrone + formate + 3 oxidized [NADPH--hemoprotein reductase] + 4 H2O + 4 H(+). Catalyzes the formation of aromatic C18 estrogens from C19 androgens. The sequence is that of Aromatase 1 (CYP19A1) from Sus scrofa (Pig).